A 296-amino-acid polypeptide reads, in one-letter code: Ribosomal RNA small subunit methyltransferase A (296 aa).

S-adenosyl-L-methionine-binding residues include Asn-30, Leu-32, Gly-57, Glu-78, Asp-103, and Asn-128.

Belongs to the class I-like SAM-binding methyltransferase superfamily. rRNA adenine N(6)-methyltransferase family. RsmA subfamily.

Its subcellular location is the cytoplasm. It catalyses the reaction adenosine(1518)/adenosine(1519) in 16S rRNA + 4 S-adenosyl-L-methionine = N(6)-dimethyladenosine(1518)/N(6)-dimethyladenosine(1519) in 16S rRNA + 4 S-adenosyl-L-homocysteine + 4 H(+). In terms of biological role, specifically dimethylates two adjacent adenosines (A1518 and A1519) in the loop of a conserved hairpin near the 3'-end of 16S rRNA in the 30S particle. May play a critical role in biogenesis of 30S subunits. The chain is Ribosomal RNA small subunit methyltransferase A from Macrococcus caseolyticus (strain JCSC5402) (Macrococcoides caseolyticum).